Reading from the N-terminus, the 118-residue chain is Basic leucine zipper transcriptional factor ATF-like 3 (118 aa).

Residues Met-1–Val-69 form a disordered region. Ser-2 and Ser-24 each carry phosphoserine. The bZIP domain occupies Asp-28–His-91. A basic motif region spans residues Arg-30 to Lys-55. The span at Gln-51–Val-69 shows a compositional bias: basic and acidic residues. The segment at Leu-56–Leu-84 is leucine-zipper.

The protein belongs to the bZIP family. Heterodimer; heterodimerizes with JUN family proteins. Interacts with JUN. In terms of tissue distribution, highly expressed in CD8-alpha(+) classical dendritic cells (cDCs), with low to absent expression in other immune cells and non-immune tissues.

It is found in the nucleus. AP-1 family transcription factor that controls the differentiation of CD8(+) thymic conventional dendritic cells in the immune system. Acts via the formation of a heterodimer with JUN family proteins that recognizes and binds DNA sequence 5'-TGA[CG]TCA-3' and regulates expression of target genes. Required for development of CD8-alpha(+) classical dendritic cells (cDCs) and related CD103(+) dendritic cells that cross-present antigens to CD8 T-cells and produce interleukin-12 (IL12) in response to pathogens. The protein is Basic leucine zipper transcriptional factor ATF-like 3 (Batf3) of Mus musculus (Mouse).